A 327-amino-acid polypeptide reads, in one-letter code: Succinylglutamate desuccinylase (327 aa).

Zn(2+)-binding residues include H53, E56, and H146. The active site involves E209.

It belongs to the AspA/AstE family. Succinylglutamate desuccinylase subfamily. Zn(2+) is required as a cofactor.

It carries out the reaction N-succinyl-L-glutamate + H2O = L-glutamate + succinate. Its pathway is amino-acid degradation; L-arginine degradation via AST pathway; L-glutamate and succinate from L-arginine: step 5/5. Functionally, transforms N(2)-succinylglutamate into succinate and glutamate. The polypeptide is Succinylglutamate desuccinylase (Serratia proteamaculans (strain 568)).